Here is a 198-residue protein sequence, read N- to C-terminus: RNA pyrophosphohydrolase (198 aa).

A Nudix hydrolase domain is found at 6 to 149; sequence GYRPNVGIVI…KKEVYRKAMK (144 aa). A Nudix box motif is present at residues 38-59; it reads GGINDNESAEQAMYRELFEEVG.

Belongs to the Nudix hydrolase family. RppH subfamily. It depends on a divalent metal cation as a cofactor.

Functionally, accelerates the degradation of transcripts by removing pyrophosphate from the 5'-end of triphosphorylated RNA, leading to a more labile monophosphorylated state that can stimulate subsequent ribonuclease cleavage. This Pasteurella multocida (strain Pm70) protein is RNA pyrophosphohydrolase.